We begin with the raw amino-acid sequence, 391 residues long: DNA repair protein NreA (391 aa).

The C4-type zinc-finger motif lies at Cys6–Cys20. Positions Gln382–Phe389 match the PIP motif motif.

It belongs to the Nre family. Interacts with the DNA polymerase sliding clamp (PCNA) via the PIP (PCNA-interacting peptide) motif.

Its function is as follows. Involved in DNA damage repair. This chain is DNA repair protein NreA, found in Archaeoglobus fulgidus (strain ATCC 49558 / DSM 4304 / JCM 9628 / NBRC 100126 / VC-16).